The primary structure comprises 281 residues: tRNA N(3)-cytidine methyltransferase METTL8, mitochondrial (281 aa).

The transit peptide at 1–22 (MNVIWRSCICRLRQGKVPHRCQ) directs the protein to the mitochondrion. Residue K80 forms a Glycyl lysine isopeptide (Lys-Gly) (interchain with G-Cter in SUMO) linkage. S-adenosyl-L-methionine-binding residues include W89 and Y93. Residues 139-151 (RTQGTETHCQESF) are compositionally biased toward polar residues. The interval 139-180 (RTQGTETHCQESFVSPEPGSRGRSAPDPDLEEYSKGPGKTEP) is disordered. S-adenosyl-L-methionine contacts are provided by G194, D220, and D246.

This sequence belongs to the methyltransferase superfamily. METL family. As to quaternary structure, interacts with EP300. Absent in embryonic lung but is induced in a fibroblast cell line by stretch. As to expression, expressed in undifferentiated progenitor cells, while its expression is inhibited by stretch. In terms of tissue distribution, absent in undifferentiated embryonic lung mesenchymal cells, but expression is induced by stretch. Expressed in mature adipose tissue.

The protein resides in the mitochondrion. It localises to the cytoplasm. The protein localises to the nucleus. The catalysed reaction is cytidine(32) in tRNA(Ser) + S-adenosyl-L-methionine = N(3)-methylcytidine(32) in tRNA(Ser) + S-adenosyl-L-homocysteine + H(+). It catalyses the reaction cytidine(32) in tRNA(Thr) + S-adenosyl-L-methionine = N(3)-methylcytidine(32) in tRNA(Thr) + S-adenosyl-L-homocysteine + H(+). The enzyme catalyses a cytidine in mRNA + S-adenosyl-L-methionine = an N(3)-methylcytidine in mRNA + S-adenosyl-L-homocysteine + H(+). In terms of biological role, mitochondrial S-adenosyl-L-methionine-dependent methyltransferase that mediates N(3)-methylcytidine modification of residue 32 of the tRNA anticodon loop of mitochondrial tRNA(Ser)(UCN) and tRNA(Thr). N(3)-methylcytidine methylation modification regulates mitochondrial translation efficiency and is required for activity of the respiratory chain. N(3)-methylcytidine methylation of mitochondrial tRNA(Ser)(UCN) requires the formation of N(6)-dimethylallyladenosine(37) (i6A37) by TRIT1 as prerequisite. May also mediate N(3)-methylcytidine modification of mRNAs. The existence of N(3)-methylcytidine modification on mRNAs is however unclear, and additional evidences are required to confirm the role of the N(3)-methylcytidine-specific mRNA methyltransferase activity of METTL8 in vivo. Its function is as follows. Overexpression in lung progenitor cells stimulates smooth muscle-specific gene expression and suppresses adipogenic gene expression. Functionally, stimulates adipogenesis. This is tRNA N(3)-cytidine methyltransferase METTL8, mitochondrial from Mus musculus (Mouse).